The primary structure comprises 186 residues: dCTP deaminase (186 aa).

107-112 (KSSYAR) contributes to the dCTP binding site. Glu133 serves as the catalytic Proton donor/acceptor. The dCTP site is built by Gln152, Tyr166, and Gln176.

It belongs to the dCTP deaminase family. As to quaternary structure, homotrimer.

It catalyses the reaction dCTP + H2O + H(+) = dUTP + NH4(+). It participates in pyrimidine metabolism; dUMP biosynthesis; dUMP from dCTP (dUTP route): step 1/2. Catalyzes the deamination of dCTP to dUTP. The polypeptide is dCTP deaminase (Chloroflexus aurantiacus (strain ATCC 29366 / DSM 635 / J-10-fl)).